We begin with the raw amino-acid sequence, 777 residues long: Degenerin unc-8 (777 aa).

The Cytoplasmic segment spans residues 1–128 (MSPLLTWNLI…VATSSFFGRY (128 aa)). A helical membrane pass occupies residues 129–149 (VWAALFMCMLMAFLLQTYWTM). Over 150 to 689 (SEYLQYRTII…KETAGYTLVN (540 aa)) the chain is Extracellular. N-linked (GlcNAc...) asparagine glycosylation is found at Asn274, Asn319, Asn357, Asn411, Asn453, Asn533, and Asn597. A helical transmembrane segment spans residues 690–710 (LFSDFGGNIGLWIGFSVITFA). At 711–777 (EFAELFCEIC…NESTKELMSK (67 aa)) the chain is on the cytoplasmic side. The segment at 752-777 (QRSPKKSQPGEDEVSTNESTKELMSK) is disordered.

It belongs to the amiloride-sensitive sodium channel (TC 1.A.6) family.

The protein resides in the membrane. Functionally, sodium permeable non-voltage-sensitive ion channel. Involved in the activity-dependent removal of selected presynaptic proteins, such as synaptobrevin snb-1, and Ras-related rab-3, in the remodeling of GABAergic motor neurons. The polypeptide is Degenerin unc-8 (Caenorhabditis elegans).